The sequence spans 607 residues: Elongation factor 4 (607 aa).

In terms of domain architecture, tr-type G spans 11-193 (KKIRNFSIIA…QIVELVPPPT (183 aa)). Residues 23 to 28 (DHGKST) and 140 to 143 (NKID) contribute to the GTP site.

The protein belongs to the TRAFAC class translation factor GTPase superfamily. Classic translation factor GTPase family. LepA subfamily.

It is found in the cell membrane. The enzyme catalyses GTP + H2O = GDP + phosphate + H(+). Functionally, required for accurate and efficient protein synthesis under certain stress conditions. May act as a fidelity factor of the translation reaction, by catalyzing a one-codon backward translocation of tRNAs on improperly translocated ribosomes. Back-translocation proceeds from a post-translocation (POST) complex to a pre-translocation (PRE) complex, thus giving elongation factor G a second chance to translocate the tRNAs correctly. Binds to ribosomes in a GTP-dependent manner. This is Elongation factor 4 from Exiguobacterium sp. (strain ATCC BAA-1283 / AT1b).